The chain runs to 210 residues: Riboflavin kinase (210 aa).

Positions 1-81 (MECKERRLIG…DLLRYFNIAS (81 aa)) are H-T-H motif-like. The segment at 82 to 210 (IRLIGRVISG…GDIVEVEILL (129 aa)) is riboflavin kinase. 91–96 (GLGEGA) lines the CDP pocket. Positions 120 and 122 each coordinate Mg(2+). Residues Thr-177 and Glu-185 each contribute to the FMN site. 190–193 (VKLR) provides a ligand contact to CDP.

Belongs to the archaeal riboflavin kinase family. Mg(2+) is required as a cofactor.

The catalysed reaction is riboflavin + CTP = CDP + FMN + H(+). It participates in cofactor biosynthesis; FMN biosynthesis; FMN from riboflavin (CTP route): step 1/1. Functionally, catalyzes the CTP-dependent phosphorylation of riboflavin (vitamin B2) to form flavin mononucleotide (FMN). This is Riboflavin kinase (ribK) from Pyrobaculum aerophilum (strain ATCC 51768 / DSM 7523 / JCM 9630 / CIP 104966 / NBRC 100827 / IM2).